Consider the following 662-residue polypeptide: Glutathione hydrolase 7 (662 aa).

At 1-106 the chain is on the cytoplasmic side; that stretch reads MAAENEASQE…AAECSCRQDG (106 aa). Residues Ser-17, Ser-72, Ser-79, and Ser-83 each carry the phosphoserine modification. Residues 26–90 form a disordered region; it reads SFPRLPEDEP…DGSPLRETRK (65 aa). Positions 72–83 are enriched in low complexity; sequence SSSSEMGSQDGS. A helical; Signal-anchor for type II membrane protein transmembrane segment spans residues 107 to 127; sequence LTVIVTACLTFATGVTVALVM. Over 128–662 the chain is Extracellular; that stretch reads QIYFGDPQIF…SPDAAGATIL (535 aa). 9 N-linked (GlcNAc...) asparagine glycosylation sites follow: Asn-198, Asn-267, Asn-283, Asn-330, Asn-353, Asn-394, Asn-519, Asn-523, and Asn-586.

It belongs to the gamma-glutamyltransferase family. Heterodimer composed of the light and heavy chains. The active site is located in the light chain. Cleaved by autocatalysis into a large and a small subunit and the autocatalytic cleavage is essential to the functional activation of the enzyme.

It localises to the membrane. It carries out the reaction an N-terminal (5-L-glutamyl)-[peptide] + an alpha-amino acid = 5-L-glutamyl amino acid + an N-terminal L-alpha-aminoacyl-[peptide]. The catalysed reaction is glutathione + H2O = L-cysteinylglycine + L-glutamate. The enzyme catalyses an S-substituted glutathione + H2O = an S-substituted L-cysteinylglycine + L-glutamate. Its pathway is sulfur metabolism; glutathione metabolism. Functionally, hydrolyzes and transfers gamma-glutamyl moieties from glutathione and other gamma-glutamyl compounds to acceptors. In Mus musculus (Mouse), this protein is Glutathione hydrolase 7.